Consider the following 492-residue polypeptide: 5-taurinomethyluridine-[tRNA] synthase subunit GTPB3, mitochondrial (492 aa).

The transit peptide at 1-20 (MWRGLSALVTRPASAPLRLC) directs the protein to the mitochondrion. 5,10-methylenetetrahydrofolate-binding residues include R52, E112, and K152. The region spanning 249–416 (GANVVVAGPP…LLQALKTELA (168 aa)) is the TrmE-type G domain. Residues 256–263 (GPPNAGKS), 282–286 (GTTRD), 303–306 (DTAG), and 374–377 (NKSD) each bind GTP. Residue N259 coordinates K(+). The Mg(2+) site is built by S263 and T284. K492 serves as a coordination point for 5,10-methylenetetrahydrofolate.

It belongs to the TRAFAC class TrmE-Era-EngA-EngB-Septin-like GTPase superfamily. TrmE GTPase family. In terms of assembly, homodimer; forms a dimer in the presence of potassium. Interacts with MTO1; forms the GTPBP3-MTO1 complex composed of homodimers of GTPBP3 and MTO1. Requires K(+) as cofactor.

The protein resides in the mitochondrion. The enzyme catalyses GTP + H2O = GDP + phosphate + H(+). GTPase component of the GTPBP3-MTO1 complex that catalyzes the 5-taurinomethyluridine (taum(5)U) modification at the 34th wobble position (U34) of mitochondrial tRNAs (mt-tRNAs), which plays a role in mt-tRNA decoding and mitochondrial translation. Taum(5)U formation on mammalian mt-tRNA requires the presence of both GTPBP3-mediated GTPase activity and MTO1 catalytic activity. The sequence is that of 5-taurinomethyluridine-[tRNA] synthase subunit GTPB3, mitochondrial from Rattus norvegicus (Rat).